We begin with the raw amino-acid sequence, 227 residues long: Cytochrome c oxidase subunit 2 (227 aa).

Over 1–14 the chain is Mitochondrial intermembrane; the sequence is MAYPFQLGLQDATS. The helical transmembrane segment at 15 to 45 threads the bilayer; sequence PIMEELLHFHDHTLMIVFLISSLVLYIITLM. Residues 46–59 are Mitochondrial matrix-facing; that stretch reads LTTKLTHTSTMDAQ. A helical transmembrane segment spans residues 60-87; it reads EVETVWTILPAIILVLIALPSLRILYMM. The Mitochondrial intermembrane portion of the chain corresponds to 88-227; the sequence is DEINNPSLTV…YFETWSALMV (140 aa). Cu cation-binding residues include His161, Cys196, Glu198, Cys200, His204, and Met207. Glu198 provides a ligand contact to Mg(2+). At Tyr218 the chain carries Phosphotyrosine.

It belongs to the cytochrome c oxidase subunit 2 family. Component of the cytochrome c oxidase (complex IV, CIV), a multisubunit enzyme composed of 14 subunits. The complex is composed of a catalytic core of 3 subunits MT-CO1, MT-CO2 and MT-CO3, encoded in the mitochondrial DNA, and 11 supernumerary subunits COX4I, COX5A, COX5B, COX6A, COX6B, COX6C, COX7A, COX7B, COX7C, COX8 and NDUFA4, which are encoded in the nuclear genome. The complex exists as a monomer or a dimer and forms supercomplexes (SCs) in the inner mitochondrial membrane with NADH-ubiquinone oxidoreductase (complex I, CI) and ubiquinol-cytochrome c oxidoreductase (cytochrome b-c1 complex, complex III, CIII), resulting in different assemblies (supercomplex SCI(1)III(2)IV(1) and megacomplex MCI(2)III(2)IV(2)). Found in a complex with TMEM177, COA6, COX18, COX20, SCO1 and SCO2. Interacts with TMEM177 in a COX20-dependent manner. Interacts with COX20. Interacts with COX16. Cu cation is required as a cofactor.

It is found in the mitochondrion inner membrane. It catalyses the reaction 4 Fe(II)-[cytochrome c] + O2 + 8 H(+)(in) = 4 Fe(III)-[cytochrome c] + 2 H2O + 4 H(+)(out). Functionally, component of the cytochrome c oxidase, the last enzyme in the mitochondrial electron transport chain which drives oxidative phosphorylation. The respiratory chain contains 3 multisubunit complexes succinate dehydrogenase (complex II, CII), ubiquinol-cytochrome c oxidoreductase (cytochrome b-c1 complex, complex III, CIII) and cytochrome c oxidase (complex IV, CIV), that cooperate to transfer electrons derived from NADH and succinate to molecular oxygen, creating an electrochemical gradient over the inner membrane that drives transmembrane transport and the ATP synthase. Cytochrome c oxidase is the component of the respiratory chain that catalyzes the reduction of oxygen to water. Electrons originating from reduced cytochrome c in the intermembrane space (IMS) are transferred via the dinuclear copper A center (CU(A)) of subunit 2 and heme A of subunit 1 to the active site in subunit 1, a binuclear center (BNC) formed by heme A3 and copper B (CU(B)). The BNC reduces molecular oxygen to 2 water molecules using 4 electrons from cytochrome c in the IMS and 4 protons from the mitochondrial matrix. In Vulpes zerda (Fennec fox), this protein is Cytochrome c oxidase subunit 2 (MT-CO2).